Consider the following 480-residue polypeptide: Ribosomal protein uS12 methylthiotransferase RimO (480 aa).

Residues 37–147 (NRIGFVSLGC…VLKHVHKYVP (111 aa)) enclose the MTTase N-terminal domain. [4Fe-4S] cluster-binding residues include C46, C82, C111, C179, C183, and C186. The 238-residue stretch at 165–402 (LTPKHYAYLK…MEVQAEISAE (238 aa)) folds into the Radical SAM core domain. The 67-residue stretch at 405 to 471 (ARFVGRTMDI…EHDLWAELVD (67 aa)) folds into the TRAM domain.

Belongs to the methylthiotransferase family. RimO subfamily. [4Fe-4S] cluster serves as cofactor.

It is found in the cytoplasm. The catalysed reaction is L-aspartate(89)-[ribosomal protein uS12]-hydrogen + (sulfur carrier)-SH + AH2 + 2 S-adenosyl-L-methionine = 3-methylsulfanyl-L-aspartate(89)-[ribosomal protein uS12]-hydrogen + (sulfur carrier)-H + 5'-deoxyadenosine + L-methionine + A + S-adenosyl-L-homocysteine + 2 H(+). Its function is as follows. Catalyzes the methylthiolation of an aspartic acid residue of ribosomal protein uS12. This is Ribosomal protein uS12 methylthiotransferase RimO from Shewanella sp. (strain ANA-3).